The chain runs to 160 residues: NSFINPIIQFLARNNLPLLANVYPYFGHIYNTADVPLSYALFTQQEANPAGYQNLFDALLDSMYFAVEKAGGPNVEIIVSESGWPSEGNSAATIENAQTYYRNLIDHVKRGAGTPKKPGKTIETYLFAMFDENDKKGEITEKHFGLFSPDQRAKYQLNFN.

Glu-81 serves as the catalytic Nucleophile.

This sequence belongs to the glycosyl hydrolase 17 family. In terms of processing, the N-terminus is blocked.

The protein resides in the secreted. It is found in the extracellular space. It carries out the reaction Hydrolysis of (1-&gt;3)-beta-D-glucosidic linkages in (1-&gt;3)-beta-D-glucans.. Functionally, implicated in the defense of plants against pathogens. This Nicotiana tabacum (Common tobacco) protein is Glucan endo-1,3-beta-glucosidase, acidic isoform PR-O (PR0).